Consider the following 481-residue polypeptide: Argininosuccinate lyase (481 aa).

The protein belongs to the lyase 1 family. Argininosuccinate lyase subfamily.

It is found in the cytoplasm. It catalyses the reaction 2-(N(omega)-L-arginino)succinate = fumarate + L-arginine. It participates in amino-acid biosynthesis; L-arginine biosynthesis; L-arginine from L-ornithine and carbamoyl phosphate: step 3/3. This chain is Argininosuccinate lyase, found in Methanococcus maripaludis (strain C6 / ATCC BAA-1332).